The chain runs to 212 residues: Peroxisomal membrane protein 4 (212 aa).

Transmembrane regions (helical) follow at residues 97–117 (GGTH…LLFG) and 151–171 (LKWD…LWLF). N-linked (GlcNAc...) asparagine glycosylation occurs at Asn-206.

The protein belongs to the peroxisomal membrane protein PXMP2/4 family. Interacts with PEX19. In terms of tissue distribution, liver.

It is found in the peroxisome membrane. The protein is Peroxisomal membrane protein 4 (Pxmp4) of Rattus norvegicus (Rat).